The sequence spans 141 residues: Large ribosomal subunit protein uL11c (141 aa).

This sequence belongs to the universal ribosomal protein uL11 family. As to quaternary structure, part of the ribosomal stalk of the 50S ribosomal subunit. Interacts with L10 and the large rRNA to form the base of the stalk. L10 forms an elongated spine to which L12 dimers bind in a sequential fashion forming a multimeric L10(L12)X complex.

It localises to the plastid. The protein localises to the chloroplast. In terms of biological role, forms part of the ribosomal stalk which helps the ribosome interact with GTP-bound translation factors. The polypeptide is Large ribosomal subunit protein uL11c (Guillardia theta (Cryptophyte)).